A 99-amino-acid chain; its full sequence is MSDFPPSYQQHENDRMVPQESSTSNNASEFNVPKKSNRRLSVVQQDESVLNREFDDLTPEVGFDADKWERKTKHPNPQKPFDFKRKPEKKYHSKSDVGF.

Residues 1–99 (MSDFPPSYQQ…KYHSKSDVGF (99 aa)) form a disordered region. The span at 19 to 29 (QESSTSNNASE) shows a compositional bias: polar residues.

This is an uncharacterized protein from Schizosaccharomyces pombe (strain 972 / ATCC 24843) (Fission yeast).